We begin with the raw amino-acid sequence, 278 residues long: Ribosomal RNA small subunit methyltransferase A (278 aa).

S-adenosyl-L-methionine-binding residues include Asn28, Leu30, Gly55, Glu77, Asp103, and Asn122.

The protein belongs to the class I-like SAM-binding methyltransferase superfamily. rRNA adenine N(6)-methyltransferase family. RsmA subfamily.

It localises to the cytoplasm. The enzyme catalyses adenosine(1518)/adenosine(1519) in 16S rRNA + 4 S-adenosyl-L-methionine = N(6)-dimethyladenosine(1518)/N(6)-dimethyladenosine(1519) in 16S rRNA + 4 S-adenosyl-L-homocysteine + 4 H(+). Its function is as follows. Specifically dimethylates two adjacent adenosines (A1518 and A1519) in the loop of a conserved hairpin near the 3'-end of 16S rRNA in the 30S particle. May play a critical role in biogenesis of 30S subunits. The sequence is that of Ribosomal RNA small subunit methyltransferase A from Cereibacter sphaeroides (strain ATCC 17029 / ATH 2.4.9) (Rhodobacter sphaeroides).